We begin with the raw amino-acid sequence, 464 residues long: MLKIYNSLTKQKEEFKPIQPGKIGMYVCGVTIYDLCHIGHGRTFVSFDVVSRYLRYSGYDLTFVRNITDIDDKIIKRAAENGESCESLTERLIGEMHKDFDALGMKRPDIEPRATEFIAEIIILCERLIERGFAYVASNGDVMFEVSKFEEYGRLSRQDLDQLQAGARVDIDMAKRSPLDFVLWKMSKPGEPTWESPWGAGRPGWHIECSAMNSAILGDHFDIHGGGSDLQFPHHENEIAQSCCATGSQYVNTWMHSGMVMVDREKMSKSLGNFFTIRDVLAHYDAESVRYFLMSGHYRSQLNYSEDNLKQARSALERLYTSLRGLDLTAQAEGGEEFVTRFTASMNDDFNTPEAYSVLFDMAREINRLKADETIANNIVQASALGARLRELADILGLLSQDPEAFLQGGAGQDDVAEIETLVQQRLDARAAKDWAAADAARDKLLAMKIILEDGPQGTTWRRK.

Cys-28 contacts Zn(2+). The short motif at 30–40 (VTIYDLCHIGH) is the 'HIGH' region element. Positions 209, 234, and 238 each coordinate Zn(2+). A 'KMSKS' region motif is present at residues 266–270 (KMSKS). Lys-269 contacts ATP.

It belongs to the class-I aminoacyl-tRNA synthetase family. As to quaternary structure, monomer. Zn(2+) serves as cofactor.

It is found in the cytoplasm. It catalyses the reaction tRNA(Cys) + L-cysteine + ATP = L-cysteinyl-tRNA(Cys) + AMP + diphosphate. This chain is Cysteine--tRNA ligase 1, found in Photobacterium profundum (strain SS9).